A 133-amino-acid polypeptide reads, in one-letter code: Exonuclease VapC9 (133 aa).

The PINc domain maps to 5–113 (YLVDASALYA…LVLVTQDREL (109 aa)). Mg(2+)-binding residues include D8, D92, and D110.

Belongs to the PINc/VapC protein family. Homodimer, 2 of which then form a homotetramer. Requires Mg(2+) as cofactor.

Its activity is regulated as follows. Inhibited by EDTA. In terms of biological role, toxic component of a type II toxin-antitoxin (TA) system. Functionally, has ribonuclease activity. Has a slow ssDNA exonuclease activity. This Pyrobaculum aerophilum (strain ATCC 51768 / DSM 7523 / JCM 9630 / CIP 104966 / NBRC 100827 / IM2) protein is Exonuclease VapC9.